A 168-amino-acid chain; its full sequence is 2-C-methyl-D-erythritol 2,4-cyclodiphosphate synthase (168 aa).

Residues aspartate 8 and histidine 10 each coordinate a divalent metal cation. Residues 8 to 10 (DLH) and 34 to 35 (HS) each bind 4-CDP-2-C-methyl-D-erythritol 2-phosphate. Histidine 42 lines the a divalent metal cation pocket. 4-CDP-2-C-methyl-D-erythritol 2-phosphate contacts are provided by residues 56–58 (DIG), 61–65 (FPDTD), 132–135 (TTTE), and arginine 142.

This sequence belongs to the IspF family. As to quaternary structure, homotrimer. A divalent metal cation serves as cofactor.

The enzyme catalyses 4-CDP-2-C-methyl-D-erythritol 2-phosphate = 2-C-methyl-D-erythritol 2,4-cyclic diphosphate + CMP. It participates in isoprenoid biosynthesis; isopentenyl diphosphate biosynthesis via DXP pathway; isopentenyl diphosphate from 1-deoxy-D-xylulose 5-phosphate: step 4/6. Involved in the biosynthesis of isopentenyl diphosphate (IPP) and dimethylallyl diphosphate (DMAPP), two major building blocks of isoprenoid compounds. Catalyzes the conversion of 4-diphosphocytidyl-2-C-methyl-D-erythritol 2-phosphate (CDP-ME2P) to 2-C-methyl-D-erythritol 2,4-cyclodiphosphate (ME-CPP) with a corresponding release of cytidine 5-monophosphate (CMP). The protein is 2-C-methyl-D-erythritol 2,4-cyclodiphosphate synthase of Desulfosudis oleivorans (strain DSM 6200 / JCM 39069 / Hxd3) (Desulfococcus oleovorans).